Consider the following 938-residue polypeptide: Bifunctional glutamine synthetase adenylyltransferase/adenylyl-removing enzyme (938 aa).

Positions 1-457 (MLEADAARLK…HFDHVFGDPS (457 aa)) are adenylyl removase. Positions 460–938 (AHTLDSMWAA…ALWTIVFGSA (479 aa)) are adenylyl transferase.

Belongs to the GlnE family. Mg(2+) is required as a cofactor.

The enzyme catalyses [glutamine synthetase]-O(4)-(5'-adenylyl)-L-tyrosine + phosphate = [glutamine synthetase]-L-tyrosine + ADP. It catalyses the reaction [glutamine synthetase]-L-tyrosine + ATP = [glutamine synthetase]-O(4)-(5'-adenylyl)-L-tyrosine + diphosphate. In terms of biological role, involved in the regulation of glutamine synthetase GlnA, a key enzyme in the process to assimilate ammonia. When cellular nitrogen levels are high, the C-terminal adenylyl transferase (AT) inactivates GlnA by covalent transfer of an adenylyl group from ATP to specific tyrosine residue of GlnA, thus reducing its activity. Conversely, when nitrogen levels are low, the N-terminal adenylyl removase (AR) activates GlnA by removing the adenylyl group by phosphorolysis, increasing its activity. The regulatory region of GlnE binds the signal transduction protein PII (GlnB) which indicates the nitrogen status of the cell. This chain is Bifunctional glutamine synthetase adenylyltransferase/adenylyl-removing enzyme, found in Aromatoleum aromaticum (strain DSM 19018 / LMG 30748 / EbN1) (Azoarcus sp. (strain EbN1)).